The following is a 614-amino-acid chain: Vitamin B12 transporter BtuB (614 aa).

The first 20 residues, 1 to 20 (MIKKASLLTACSVTAFSAWA), serve as a signal peptide directing secretion. Residues 26–33 (DTLVVTAN) carry the TonB box motif. The region spanning 38–152 (PRSTVLAPTT…IGGVVNIITT (115 aa)) is the TBDR plug domain. Cyanocob(III)alamin-binding positions include L83, S85, N92, and 110-111 (VS). Residues 155–614 (EPGTEISAGW…EYTLSGSYTF (460 aa)) enclose the TBDR beta-barrel domain. 3 beta stranded membrane passes run 158-165 (TEISAGWG), 169-178 (YQNYDVSTQQ), and 184-195 (TRVTLLGDYAHT). Ca(2+) contacts are provided by D199, Q211, D213, and D215. Transmembrane regions (beta stranded) follow at residues 217 to 227 (FLSKTLYGALE) and 232 to 248 (DAWS…NRTN). Residues Y249 and D250 each contribute to the Ca(2+) site. A251 is a binding site for cyanocob(III)alamin. D261 contributes to the Ca(2+) binding site. The next 14 beta stranded transmembrane spans lie at 263-277 (RKLY…LRYN), 279-296 (ELIK…KDYN), 309-325 (TLDE…NNII), 328-337 (HGNVGAGVDW), 353-369 (YDQR…QQVG), 371-381 (FTFEGAARSDD), 385-400 (FGRH…WEFI), 403-417 (YRFI…KAPN), 434-443 (KSKQWEGAFE), 449-458 (VNWRISGYRN), 473-490 (YYNE…TANF), 494-509 (PLTH…ARNA), 517-529 (RRAK…QLDW), and 535-550 (DWGI…YDKD). Position 309 (T309) interacts with cyanocob(III)alamin. Position 517 (R517) interacts with cyanocob(III)alamin. Y551 serves as a coordination point for cyanocob(III)alamin. 3 beta stranded membrane-spanning segments follow: residues 558–572 (TVKM…LAVA), 585–596 (IANLFDKDYETV), and 602–614 (AGRE…SYTF). The TonB C-terminal box signature appears at 597-614 (YGYQTAGREYTLSGSYTF).

It belongs to the TonB-dependent receptor family. BtuB (TC 1.B.14.3.1) subfamily.

It localises to the cell outer membrane. Functionally, involved in the active translocation of vitamin B12 (cyanocobalamin) across the outer membrane to the periplasmic space. It derives its energy for transport by interacting with the trans-periplasmic membrane protein TonB. The chain is Vitamin B12 transporter BtuB from Shigella dysenteriae serotype 1 (strain Sd197).